The following is a 94-amino-acid chain: Co-chaperonin GroES (94 aa).

Belongs to the GroES chaperonin family. In terms of assembly, heptamer of 7 subunits arranged in a ring. Interacts with the chaperonin GroEL.

Its subcellular location is the cytoplasm. Its function is as follows. Together with the chaperonin GroEL, plays an essential role in assisting protein folding. The GroEL-GroES system forms a nano-cage that allows encapsulation of the non-native substrate proteins and provides a physical environment optimized to promote and accelerate protein folding. GroES binds to the apical surface of the GroEL ring, thereby capping the opening of the GroEL channel. In Desulfitobacterium hafniense (strain DSM 10664 / DCB-2), this protein is Co-chaperonin GroES.